The sequence spans 498 residues: MATCAADLAPLLGPVAANATDYLCNRFADTTSAVDATYLLFSAYLVFAMQLGFAMLCAGSVRAKNTMNIMLTNVLDAAAGALFYYLFGFAFAFGTPSNGFIGKQFFGLKHMPQTGFDYDFFLFQWAFAIAAAGITSGSIAERTQFVAYLIYSAFLTGFVYPVVSHWIWSADGWASASRTSGPLLFGSGVIDFAGSGVVHMVGGVAGLWGALIEGPRIGRFDHAGRSVALKGHSASLVVLGTFLLWFGWYGFNPGSFTTILKTYGPAGGINGQWSGVGRTAVTTTLAGSVAALTTLFGKRLQTGHWNVVDVCNGLLGGFAAITAGCSVVDPWAAIICGFVSAWVLIGLNALAARLKFDDPLEAAQLHGGCGAWGILFTALFARQKYVEEIYGAGRPYGLFMGGGGKLLAAHVIQILVIFGWVSCTMGPLFYGLKKLGLLRISAEDETSGMDLTRHGGFAYVYHDEDEHDKSGVGGFMLRSAQTRVEPAAAAASNSNNQV.

Helical transmembrane passes span 39–59 (LLFS…LCAG), 74–94 (VLDA…FAFG), 120–140 (FFLF…GSIA), 148–168 (YLIY…HWIW), 192–212 (FAGS…GALI), 236–256 (LVVL…PGSF), 274–296 (SGVG…TTLF), 307–327 (VVDV…GCSV), 331–351 (WAAI…NALA), 360–380 (LEAA…TALF), and 411–431 (VIQI…LFYG).

Belongs to the ammonia transporter channel (TC 1.A.11.2) family. In terms of tissue distribution, expressed in roots and shoots.

The protein localises to the membrane. In terms of biological role, ammonium transporter probably involved in ammonium uptake from the soil. The protein is Ammonium transporter 1 member 1 (AMT1-1) of Oryza sativa subsp. japonica (Rice).